A 741-amino-acid polypeptide reads, in one-letter code: Transketolase-1, chloroplastic (741 aa).

Residues 1 to 66 (MASTSSLALS…NRSLRPLVRA (66 aa)) constitute a chloroplast transit peptide. Positions 22–51 (GSDQRGSLPAFSGLKSTGSRASASSRRRIA) are disordered. Residue Ala67 is modified to N-acetylalanine. His103 is a substrate binding site. Residues His143 and 192–194 (GPL) contribute to the thiamine diphosphate site. Residue Asp233 participates in Mg(2+) binding. Residues Gly234 and Asn263 each coordinate thiamine diphosphate. Asn263 and Ile265 together coordinate Mg(2+). A substrate-binding site is contributed by His340. His340 is a thiamine diphosphate binding site. Phosphoserine is present on Ser428. Substrate-binding residues include Arg434 and Ser461. Positions 488 and 515 each coordinate thiamine diphosphate. The active-site Proton donor is Glu488. Positions 539, 547, and 598 each coordinate substrate.

This sequence belongs to the transketolase family. As to quaternary structure, homodimer. It depends on Mg(2+) as a cofactor. Ca(2+) is required as a cofactor. Mn(2+) serves as cofactor. The cofactor is Co(2+). Requires thiamine diphosphate as cofactor.

The protein resides in the plastid. Its subcellular location is the chloroplast stroma. It catalyses the reaction D-sedoheptulose 7-phosphate + D-glyceraldehyde 3-phosphate = aldehydo-D-ribose 5-phosphate + D-xylulose 5-phosphate. Its pathway is carbohydrate biosynthesis; Calvin cycle. Its function is as follows. Catalyzes the reversible transfer of a two-carbon ketol group from fructose-6-phosphate or sedoheptulose-7-phosphate to glyceraldehyde-3-phosphate to yield xylulose-5-phosphate and erythrose-4-phosphate or ribose-5-phosphate, respectively. Could act as a stress sensor involved in adaptation process. The protein is Transketolase-1, chloroplastic (TKL-1) of Arabidopsis thaliana (Mouse-ear cress).